The following is a 328-amino-acid chain: Glyoxylate reductase/hydroxypyruvate reductase (328 aa).

S36 is modified (phosphoserine). Substrate is bound at residue V83–G84. Residues G162 to I164, R185 to R188, S217, and I243 contribute to the NADP(+) site. Residues R245, D269, and H293–S296 contribute to the substrate site. Catalysis depends on H293, which acts as the Proton donor. Position 295 (G295) interacts with NADP(+). T298 is subject to Phosphothreonine.

This sequence belongs to the D-isomer specific 2-hydroxyacid dehydrogenase family. As to quaternary structure, homodimer.

It catalyses the reaction glycolate + NADP(+) = glyoxylate + NADPH + H(+). The catalysed reaction is (R)-glycerate + NAD(+) = 3-hydroxypyruvate + NADH + H(+). It carries out the reaction (R)-glycerate + NADP(+) = 3-hydroxypyruvate + NADPH + H(+). In terms of biological role, enzyme with hydroxy-pyruvate reductase, glyoxylate reductase and D-glycerate dehydrogenase enzymatic activities. Reduces hydroxypyruvate to D-glycerate, glyoxylate to glycolate oxidizes D-glycerate to hydroxypyruvate. The chain is Glyoxylate reductase/hydroxypyruvate reductase (Grhpr) from Mus musculus (Mouse).